A 473-amino-acid chain; its full sequence is Lactate utilization protein B (473 aa).

2 consecutive 4Fe-4S ferredoxin-type domains span residues 302–332 and 351–380; these read GSEF…GHSY and YDDY…LHDL. 7 residues coordinate [4Fe-4S] cluster: Cys311, Cys314, Cys317, Cys321, Cys364, Cys367, and Cys371.

It belongs to the LutB/YkgF family.

Its function is as follows. Is involved in L-lactate degradation and allows cells to grow with lactate as the sole carbon source. Has probably a role as an electron transporter during oxidation of L-lactate. This is Lactate utilization protein B from Bacillus anthracis (strain A0248).